The following is a 250-amino-acid chain: MKKEFLHFLAFLITFVFCVKTQQVVKILRSRTMIDFGLEFQKAQIEMHNNPEDRVRFVDAVNLCLPASDTFFQNPDRENKFSENYSIKLIDTTPHVSEIVLQTFVKEILSLSNINTEDTLGKETLGKETYRLSNLLKKSKFGMESHHRIQNNSEGPNTFENGLGISTPKHGIAHFADAIQRFLDHKGNSSSNTRAAGARVEAIREALNDRDAINKSEEARKAREEVFIPSEPSKPSIASKRSSASKSTKS.

Residues 207–226 (LNDRDAINKSEEARKAREEV) show a composition bias toward basic and acidic residues. A disordered region spans residues 207-250 (LNDRDAINKSEEARKAREEVFIPSEPSKPSIASKRSSASKSTKS). The segment covering 233-250 (SKPSIASKRSSASKSTKS) has biased composition (low complexity).

The protein resides in the plastid. Its subcellular location is the chloroplast. This is an uncharacterized protein from Chlorella vulgaris (Green alga).